A 93-amino-acid polypeptide reads, in one-letter code: MLCAVYKSRKKAETYLFVERREDFSRVPEVLMSAFGRPELVLMTKLDPAKPLGIASTSRVMEALQSQGFYLQVPPPPENLLEQHKAQLKAERE.

The region spanning 1–85 is the YcgL domain; sequence MLCAVYKSRK…PPENLLEQHK (85 aa).

The polypeptide is YcgL domain-containing protein AHA_2135 (Aeromonas hydrophila subsp. hydrophila (strain ATCC 7966 / DSM 30187 / BCRC 13018 / CCUG 14551 / JCM 1027 / KCTC 2358 / NCIMB 9240 / NCTC 8049)).